The following is a 76-amino-acid chain: Small ribosomal subunit protein bS18 (76 aa).

The protein belongs to the bacterial ribosomal protein bS18 family. As to quaternary structure, part of the 30S ribosomal subunit. Forms a tight heterodimer with protein bS6.

Functionally, binds as a heterodimer with protein bS6 to the central domain of the 16S rRNA, where it helps stabilize the platform of the 30S subunit. This Tolumonas auensis (strain DSM 9187 / NBRC 110442 / TA 4) protein is Small ribosomal subunit protein bS18.